Here is a 64-residue protein sequence, read N- to C-terminus: Antimicrobial peptide 1 (64 aa).

Residues 1–26 (MAKVSSSLLKFAIVLILVLSMSAIIS) form the signal peptide. Cystine bridges form between Cys-29/Cys-46, Cys-36/Cys-50, and Cys-45/Cys-61.

Belongs to the AMP family.

It is found in the secreted. Functionally, possesses antifungal and antibacterial activity. The protein is Antimicrobial peptide 1 of Mesembryanthemum crystallinum (Common ice plant).